Consider the following 678-residue polypeptide: Amino-acid acetyltransferase, mitochondrial (678 aa).

Positions 86-111 are disordered; it reads LKAQHPPKAQTEPTTGHSKGTVTQSL. Residues 96-111 show a composition bias toward polar residues; it reads TEPTTGHSKGTVTQSL. An N-acetyltransferase domain is found at 499-668; sequence NRPRLSLDDP…YEQVCRSIQP (170 aa).

This sequence belongs to the acetyltransferase family.

The protein localises to the mitochondrion. It carries out the reaction L-glutamate + acetyl-CoA = N-acetyl-L-glutamate + CoA + H(+). It participates in amino-acid biosynthesis; L-arginine biosynthesis; N(2)-acetyl-L-ornithine from L-glutamate: step 1/4. Functionally, N-acetylglutamate synthase involved in arginine biosynthesis. The polypeptide is Amino-acid acetyltransferase, mitochondrial (arg2) (Aspergillus oryzae (strain ATCC 42149 / RIB 40) (Yellow koji mold)).